The primary structure comprises 291 residues: NAD kinase (291 aa).

D55 acts as the Proton acceptor in catalysis. NAD(+) contacts are provided by residues D55–G56, R60, N130–E131, D160, and T171–S176.

The protein belongs to the NAD kinase family. The cofactor is a divalent metal cation.

The protein resides in the cytoplasm. It catalyses the reaction NAD(+) + ATP = ADP + NADP(+) + H(+). Functionally, involved in the regulation of the intracellular balance of NAD and NADP, and is a key enzyme in the biosynthesis of NADP. Catalyzes specifically the phosphorylation on 2'-hydroxyl of the adenosine moiety of NAD to yield NADP. This is NAD kinase from Corynebacterium glutamicum (strain ATCC 13032 / DSM 20300 / JCM 1318 / BCRC 11384 / CCUG 27702 / LMG 3730 / NBRC 12168 / NCIMB 10025 / NRRL B-2784 / 534).